Consider the following 427-residue polypeptide: Serine--tRNA ligase (427 aa).

Position 233–235 (233–235) interacts with L-serine; it reads TAE. 264–266 serves as a coordination point for ATP; it reads RSE. Glutamate 287 contacts L-serine. 351–354 lines the ATP pocket; the sequence is EISS. Residue serine 386 coordinates L-serine.

This sequence belongs to the class-II aminoacyl-tRNA synthetase family. Type-1 seryl-tRNA synthetase subfamily. Homodimer. The tRNA molecule binds across the dimer.

The protein resides in the cytoplasm. It carries out the reaction tRNA(Ser) + L-serine + ATP = L-seryl-tRNA(Ser) + AMP + diphosphate + H(+). The enzyme catalyses tRNA(Sec) + L-serine + ATP = L-seryl-tRNA(Sec) + AMP + diphosphate + H(+). The protein operates within aminoacyl-tRNA biosynthesis; selenocysteinyl-tRNA(Sec) biosynthesis; L-seryl-tRNA(Sec) from L-serine and tRNA(Sec): step 1/1. In terms of biological role, catalyzes the attachment of serine to tRNA(Ser). Is also able to aminoacylate tRNA(Sec) with serine, to form the misacylated tRNA L-seryl-tRNA(Sec), which will be further converted into selenocysteinyl-tRNA(Sec). In Dechloromonas aromatica (strain RCB), this protein is Serine--tRNA ligase.